Consider the following 289-residue polypeptide: Probable early E4 33 kDa protein (289 aa).

It belongs to the adenoviridae E4 30 to 34 kDa protein family. As to quaternary structure, interacts with E1B-55k.

Its subcellular location is the host nucleus. The protein resides in the host cytoplasm. In terms of biological role, plays a major role to prevent cellular inhibition of viral genome replication by nuclear bodies. Assembles an SCF-like E3 ubiquitin ligase complex based on the cellular proteins ELOB, ELOC, CUL5 and RBX1, in cooperation with viral E1B-55K. This viral RING-type ligase ubiquitinates cellular substrates prior to proteasomal degradation: p53/TP53, LIG4, MRE11-RAD50-NBS1 (MRN) complex, ITGA3, DAXX and BLM. This is Probable early E4 33 kDa protein from Mus musculus (Mouse).